The primary structure comprises 557 residues: MGNHKAALTKQVFTFASELYAYGVREVVISPGSRSTPLALAFEAHPNIKTWIHPDERSAAFFAVGLIKGSERPVAILCTSGTATANYTPAIAESQISRIPLIVLTSDRPHELRSVGAPQAINQVNMFNNYVSYEFDMPIADDSKETIDAIYYQMQIASQYLYGPHKGPIHFNLPFRDPLTPDLNATELLTSEMKILPHYQKSIDASALRHILNKKKGLIIVGDMQHQEVDQILTYSTIYDLPILADPLSHLRKFDHPNVICTYDLLFRSGLDLNVDFVIRVGKPVISKKLNQWLKKTDAFQILVQNNDKIDVFPIAPDISYEISANDFFRSLMEDTRVNRVSWLEKWQCIEKKGRKEIKCYLEQATDESAFVGELIKKTSEKDALFISNSMPIRDVDNLLLNKNIDVYANRGANGIDGIVSTALGMAVHKRITLLIGDLSFYHDMNGLLMSKLNNIQMNIVLLNNDGGGIFSYLPQKESATDYFERLFGTPTGLDFEYTAKLYQFDFKRFNSVSEFKNATLLSETSTIYELITNREDNFKQHQILYQKLSEMIHDTL.

It belongs to the TPP enzyme family. MenD subfamily. In terms of assembly, homodimer. The cofactor is Mg(2+). Mn(2+) is required as a cofactor. Requires thiamine diphosphate as cofactor.

It catalyses the reaction isochorismate + 2-oxoglutarate + H(+) = 5-enolpyruvoyl-6-hydroxy-2-succinyl-cyclohex-3-ene-1-carboxylate + CO2. The protein operates within quinol/quinone metabolism; 1,4-dihydroxy-2-naphthoate biosynthesis; 1,4-dihydroxy-2-naphthoate from chorismate: step 2/7. It functions in the pathway quinol/quinone metabolism; menaquinone biosynthesis. Catalyzes the thiamine diphosphate-dependent decarboxylation of 2-oxoglutarate and the subsequent addition of the resulting succinic semialdehyde-thiamine pyrophosphate anion to isochorismate to yield 2-succinyl-5-enolpyruvyl-6-hydroxy-3-cyclohexene-1-carboxylate (SEPHCHC). The protein is 2-succinyl-5-enolpyruvyl-6-hydroxy-3-cyclohexene-1-carboxylate synthase of Staphylococcus aureus (strain bovine RF122 / ET3-1).